The chain runs to 725 residues: Dipeptidyl-peptidase 5 (725 aa).

A signal peptide spans 1-18 (MGALRWLSIAATASTALA). N75, N96, N153, N258, N383, and N453 each carry an N-linked (GlcNAc...) asparagine glycan. S563 functions as the Charge relay system in the catalytic mechanism. N610 is a glycosylation site (N-linked (GlcNAc...) asparagine). Residues D646 and H678 each act as charge relay system in the active site.

Belongs to the peptidase S9C family.

Its subcellular location is the secreted. The chain is Dipeptidyl-peptidase 5 from Aspergillus oryzae (strain ATCC 42149 / RIB 40) (Yellow koji mold).